We begin with the raw amino-acid sequence, 89 residues long: Probable Fe(2+)-trafficking protein (89 aa).

The protein belongs to the Fe(2+)-trafficking protein family.

Its function is as follows. Could be a mediator in iron transactions between iron acquisition and iron-requiring processes, such as synthesis and/or repair of Fe-S clusters in biosynthetic enzymes. This Acinetobacter baumannii (strain SDF) protein is Probable Fe(2+)-trafficking protein.